The primary structure comprises 199 residues: Chaperone protein TorD (199 aa).

Belongs to the TorD/DmsD family. TorD subfamily.

It localises to the cytoplasm. Involved in the biogenesis of TorA. Acts on TorA before the insertion of the molybdenum cofactor and, as a result, probably favors a conformation of the apoenzyme that is competent for acquiring the cofactor. The protein is Chaperone protein TorD of Escherichia coli O139:H28 (strain E24377A / ETEC).